Consider the following 116-residue polypeptide: Spexin (116 aa).

An N-terminal signal peptide occupies residues 1–26 (MKGFKSLVVMTLTLFLVFSFMGNCNS). Residues 27–35 (APQRLFERR) constitute a propeptide that is removed on maturation. Position 49 is a glutamine amide (Gln-49). 2 propeptides span residues 50–116 (GRRF…LLNW) and 74–116 (PNSQ…LLNW). Residues 53–73 (FLSDQSRRKDLSDRPPLERRS) are compositionally biased toward basic and acidic residues. Residues 53–80 (FLSDQSRRKDLSDRPPLERRSPNSQQLT) are disordered.

This sequence belongs to the spexin family.

The protein resides in the secreted. It localises to the extracellular space. It is found in the cytoplasmic vesicle. Its subcellular location is the secretory vesicle. Functionally, plays a role as a central modulator of cardiovascular and renal function and nociception. Also plays a role in energy metabolism and storage. Inhibits adrenocortical cell proliferation with minor stimulation on corticosteroid release. In terms of biological role, acts as a ligand for galanin receptors GALR2 and GALR3. Intracerebroventricular administration of the peptide induces an increase in arterial blood pressure, a decrease in both heart rate and renal excretion and delayed natriuresis. Intraventricular administration of the peptide induces antinociceptive activity. Also induces contraction of muscarinic-like stomach smooth muscles. Intraperitoneal administration of the peptide induces a reduction in food consumption and body weight. Inhibits long chain fatty acid uptake into adipocytes. Its function is as follows. Intracerebroventricular administration of the peptide induces a decrease in heart rate, but no change in arterial pressure, and an increase in urine flow rate. Intraventricular administration of the peptide induces antinociceptive activity. The protein is Spexin (SPX) of Bos taurus (Bovine).